The sequence spans 543 residues: MAYFFDFPTDTWVEDASPGGPPKRAFGHGLAAGSSHFASPVSRRRLPTITALLLFSLLSASQSGALSVSQCSRRVSLGPLLSRVSSVSCTPSAAASALASSLYPTDSLSSVEGSVAPRPPPSSLAFVLRRVPPAAYSSSLSPSVLRFKHSLPRPLQGSLVCAPGILGGAAGSARFAGCCGSQGRSCGSGKNPELPLKGSKDEVIPRVGTSTAGPRPDWFHVPAPQAASRGAEESRYQQLQKQIRGLDLHTVCEEAKCPNIGECWNGGTATLILLGDTCTRGCRFCAIKTSSKPPPPDPLEPEKVADAVAKWDIDYVVMTSVDRDDMPDGGAGHFARTVQLVKKAKPSMLIECLVSDFQGMEESVRTLAQSGLDVYAHNIETVRRLTPYVRDKRAKYDQSLRVLHLAKQFNPSLFTKSSIMLGLGETSEEVVRTLRDLRDHDVDVVTLGQYLRPTKQQLGVVEYVTPETFKKYQDIAEEMGFKYVASGPLVRSSYKAGEYYMKHLIDDARKHGRRETVKQVKLEADVGTLKGTTTTFQVNEKEA.

A signal peptide spans 1-63; the sequence is MAYFFDFPTD…LFSLLSASQS (63 aa). [4Fe-4S] cluster contacts are provided by C252, C257, C263, C278, C282, C285, and S493. The region spanning 264–482 is the Radical SAM core domain; the sequence is WNGGTATLIL…QDIAEEMGFK (219 aa).

Belongs to the radical SAM superfamily. Lipoyl synthase family. Requires [4Fe-4S] cluster as cofactor.

The protein localises to the plastid. It localises to the apicoplast. It catalyses the reaction [[Fe-S] cluster scaffold protein carrying a second [4Fe-4S](2+) cluster] + N(6)-octanoyl-L-lysyl-[protein] + 2 oxidized [2Fe-2S]-[ferredoxin] + 2 S-adenosyl-L-methionine + 4 H(+) = [[Fe-S] cluster scaffold protein] + N(6)-[(R)-dihydrolipoyl]-L-lysyl-[protein] + 4 Fe(3+) + 2 hydrogen sulfide + 2 5'-deoxyadenosine + 2 L-methionine + 2 reduced [2Fe-2S]-[ferredoxin]. It functions in the pathway protein modification; protein lipoylation via endogenous pathway; protein N(6)-(lipoyl)lysine from octanoyl-[acyl-carrier-protein]: step 2/2. Catalyzes the radical-mediated insertion of two sulfur atoms into the C-6 and C-8 positions of the octanoyl moiety bound to the lipoyl domains of lipoate-dependent enzymes, thereby converting the octanoylated domains into lipoylated derivatives. This chain is Lipoyl synthase, apicoplast, found in Toxoplasma gondii.